We begin with the raw amino-acid sequence, 450 residues long: Flavin-containing monooxygenase FMO GS-OX-like 3 (450 aa).

17 to 22 (GAGPAG) serves as a coordination point for FAD. 215 to 220 (GNSSSA) is an NADP(+) binding site.

Belongs to the FMO family. The cofactor is FAD.

Catalyzes the conversion of methylthioalkyl glucosinolates of any chain length into methylsulfinylalkyl glucosinolates. In Arabidopsis thaliana (Mouse-ear cress), this protein is Flavin-containing monooxygenase FMO GS-OX-like 3.